The primary structure comprises 517 residues: Crotonobetaine/carnitine--CoA ligase (517 aa).

The protein belongs to the ATP-dependent AMP-binding enzyme family.

The enzyme catalyses 4-(trimethylamino)butanoate + ATP + CoA = 4-(trimethylamino)butanoyl-CoA + AMP + diphosphate. It carries out the reaction crotonobetaine + ATP + CoA = crotonobetainyl-CoA + AMP + diphosphate. The catalysed reaction is (R)-carnitine + ATP + CoA = (R)-carnitinyl-CoA + AMP + diphosphate. It participates in amine and polyamine metabolism; carnitine metabolism. Its function is as follows. Catalyzes the transfer of CoA to carnitine, generating the initial carnitinyl-CoA needed for the CaiB reaction cycle. Also has activity toward crotonobetaine and gamma-butyrobetaine. The polypeptide is Crotonobetaine/carnitine--CoA ligase (Escherichia coli (strain SE11)).